Consider the following 576-residue polypeptide: Probable lysosomal cobalamin transporter (576 aa).

The next 10 membrane-spanning stretches (helical) occupy residues 8 to 28, 40 to 60, 98 to 118, 145 to 165, 188 to 208, 312 to 332, 347 to 367, 377 to 397, 419 to 439, and 503 to 523; these read LIWAVYAIVVAVLVMVASVFI, VVTFTCIVAITSLLATVLLLP, YLLYSLDAFLCLLAIPFVYFW, TISFIAIVVVLFIVGFLVPVA, VLTFTLGLLITMGLFLYILYT, LLGGIAILLITLMIWISMLLT, GYILSGIGVFNPINWIFVQSA, LTVVVLLLFGSSVVGISTIGI, LTTAMLMLTILALDYSIPMLV, and FFGTVFFWSQFIFLVIYLLVL. The disordered stretch occupies residues 549 to 576; the sequence is RLLTSSARGVGDTYQSVGGRNNFSTRAG. The span at 561–576 shows a compositional bias: polar residues; that stretch reads TYQSVGGRNNFSTRAG. The N-linked (GlcNAc...) asparagine glycan is linked to Asn570.

The protein belongs to the LIMR family. LMBRD1 subfamily.

It localises to the lysosome membrane. In terms of biological role, probable lysosomal cobalamin transporter. Required to export cobalamin from lysosomes allowing its conversion to cofactors. In Aspergillus niger (strain ATCC MYA-4892 / CBS 513.88 / FGSC A1513), this protein is Probable lysosomal cobalamin transporter.